An 888-amino-acid polypeptide reads, in one-letter code: Valine--tRNA ligase (888 aa).

The short motif at 43–53 is the 'HIGH' region element; the sequence is PFTSGTLHLGH. A 'KMSKS' region motif is present at residues 534 to 538; that stretch reads KMSKS. Residue Lys537 participates in ATP binding.

This sequence belongs to the class-I aminoacyl-tRNA synthetase family. ValS type 2 subfamily.

The protein localises to the cytoplasm. It carries out the reaction tRNA(Val) + L-valine + ATP = L-valyl-tRNA(Val) + AMP + diphosphate. In terms of biological role, catalyzes the attachment of valine to tRNA(Val). As ValRS can inadvertently accommodate and process structurally similar amino acids such as threonine, to avoid such errors, it has a 'posttransfer' editing activity that hydrolyzes mischarged Thr-tRNA(Val) in a tRNA-dependent manner. This chain is Valine--tRNA ligase, found in Thermococcus kodakarensis (strain ATCC BAA-918 / JCM 12380 / KOD1) (Pyrococcus kodakaraensis (strain KOD1)).